The following is a 291-amino-acid chain: Protease HtpX homolog (291 aa).

2 helical membrane passes run 4–24 (VVLF…SARI) and 38–58 (MGML…ISLL). His-144 lines the Zn(2+) pocket. The active site involves Glu-145. His-148 contacts Zn(2+). A run of 2 helical transmembrane segments spans residues 152–172 (GDMV…IFLS) and 199–219 (ISSI…VMCF). Glu-224 serves as a coordination point for Zn(2+).

It belongs to the peptidase M48B family. Requires Zn(2+) as cofactor.

The protein localises to the cell inner membrane. The protein is Protease HtpX homolog of Chlorobium limicola (strain DSM 245 / NBRC 103803 / 6330).